Consider the following 591-residue polypeptide: MKDHIKQKLTVLPDQPGCYLMKDRQGTIIYVGKAKVLKNRVRSYFTGSHDAKTQRLVGEIADFEYIVTSSNIEALILEMNLIKKHDPKYNVMLKDDKSYPYLKLTNEEHPRLVTTRKLKKDGGKYFGPYPNAGAANETKKLLDRLYPLRKCRTLPDKVCLYYHIGQCLAPCVYEVTPEQNEQMVQEITRFLKYGHKEVKVELEKKMHKAAEELNFERAKELRDTLGYMEAVMEKQTMMVNDRVDRDVFGYAYDKGWMCVQVFFVRQGKLIERDVSIFPFYKEAEEDFLTFIGQFYLQKDHIKPGEVLLPAGTDAALVEQLLDVSVHIPKRGKKKELVDVAMRNATMALKEKFALIERNEERTIKAVEQLGEAMGIPTPYRIEAFDNSNIQGTDPVSAMVAFIDGKPNKKEYRKYKIKTVTGPDDYESMREVVRRRYVRLLKEQRSLPDLIVIDGGKGQIAAAQEILHDELGLSIPVCGLAKDEKHRTSQLLLGDPPQVVPLKRDSHEFYLLQRIQDEVHRFALTFHRQTRSKTFFQSVLDDVPGIGEKRKRQLLKHFGSVKKMKEASIDDFLALSIPKSVAETLYNKLQTK.

The GIY-YIG domain maps to 14-91; sequence DQPGCYLMKD…IKKHDPKYNV (78 aa). The 36-residue stretch at 196–231 folds into the UVR domain; that stretch reads KEVKVELEKKMHKAAEELNFERAKELRDTLGYMEAV.

Belongs to the UvrC family. Interacts with UvrB in an incision complex.

It localises to the cytoplasm. Its function is as follows. The UvrABC repair system catalyzes the recognition and processing of DNA lesions. UvrC both incises the 5' and 3' sides of the lesion. The N-terminal half is responsible for the 3' incision and the C-terminal half is responsible for the 5' incision. The protein is UvrABC system protein C of Halalkalibacterium halodurans (strain ATCC BAA-125 / DSM 18197 / FERM 7344 / JCM 9153 / C-125) (Bacillus halodurans).